A 271-amino-acid polypeptide reads, in one-letter code: Putative pyruvate, phosphate dikinase regulatory protein 2 (271 aa).

151-158 provides a ligand contact to ADP; sequence GVSRTSKT.

The protein belongs to the pyruvate, phosphate/water dikinase regulatory protein family. PDRP subfamily.

The catalysed reaction is N(tele)-phospho-L-histidyl/L-threonyl-[pyruvate, phosphate dikinase] + ADP = N(tele)-phospho-L-histidyl/O-phospho-L-threonyl-[pyruvate, phosphate dikinase] + AMP + H(+). It catalyses the reaction N(tele)-phospho-L-histidyl/O-phospho-L-threonyl-[pyruvate, phosphate dikinase] + phosphate + H(+) = N(tele)-phospho-L-histidyl/L-threonyl-[pyruvate, phosphate dikinase] + diphosphate. Its function is as follows. Bifunctional serine/threonine kinase and phosphorylase involved in the regulation of the pyruvate, phosphate dikinase (PPDK) by catalyzing its phosphorylation/dephosphorylation. This chain is Putative pyruvate, phosphate dikinase regulatory protein 2, found in Staphylococcus haemolyticus (strain JCSC1435).